The chain runs to 97 residues: Nucleoid-associated protein Hac_0048 (97 aa).

This sequence belongs to the YbaB/EbfC family. Homodimer.

It localises to the cytoplasm. It is found in the nucleoid. In terms of biological role, binds to DNA and alters its conformation. May be involved in regulation of gene expression, nucleoid organization and DNA protection. This is Nucleoid-associated protein Hac_0048 from Helicobacter acinonychis (strain Sheeba).